The sequence spans 210 residues: Probable nicotinate-nucleotide adenylyltransferase (210 aa).

Belongs to the NadD family.

It carries out the reaction nicotinate beta-D-ribonucleotide + ATP + H(+) = deamido-NAD(+) + diphosphate. Its pathway is cofactor biosynthesis; NAD(+) biosynthesis; deamido-NAD(+) from nicotinate D-ribonucleotide: step 1/1. Catalyzes the reversible adenylation of nicotinate mononucleotide (NaMN) to nicotinic acid adenine dinucleotide (NaAD). This Streptococcus pyogenes serotype M3 (strain ATCC BAA-595 / MGAS315) protein is Probable nicotinate-nucleotide adenylyltransferase.